A 312-amino-acid polypeptide reads, in one-letter code: Zinc-finger homeodomain protein 9 (312 aa).

The disordered stretch occupies residues 1–27 (MLEVRSMDMTPKSPEPESETPTRIQPA). Ser13 is modified (phosphoserine). The segment at 52–103 (YKECLKNHAAAIGGHALDGCGEFMPSPSSTPSDPTSLKCAACGCHRNFHRRE) adopts a ZF-HD dimerization-type; degenerate zinc-finger fold. 2 disordered regions span residues 128-155 (QPHH…PPPI) and 253-312 (FSGG…SSSS). Residues 136-155 (PPPLAPPLPRSPNSSSPPPI) show a composition bias toward pro residues. Residues 192–255 (RKRFRTKFSS…NNKNSFKFSG (64 aa)) constitute a DNA-binding region (homeobox). Phosphoserine is present on Ser273.

Homo- and heterodimer with other ZFHD proteins. Interacts with MIF3; this interaction prevents nuclear localization and DNA-binding to inhibit transcription regulation activity. Binds to ZHD1, ZHD2 and ZHD11. Mostly expressed in flowers, stems and inflorescence and, to a lower extent, in leaves and stems.

Its subcellular location is the nucleus. In terms of biological role, putative transcription factor. The protein is Zinc-finger homeodomain protein 9 (ZHD9) of Arabidopsis thaliana (Mouse-ear cress).